Consider the following 378-residue polypeptide: Protein KlaB (378 aa).

Belongs to the TelA family.

Its function is as follows. Belongs to the kla operon, which is associated with cryptic tellurite resistance, and IncW plasmid fertility inhibition. This Escherichia coli protein is Protein KlaB (klaB).